Consider the following 407-residue polypeptide: Homeobox even-skipped homolog protein 1 (407 aa).

2 disordered regions span residues 29–120 (EAVG…SDFY) and 137–179 (EYQH…ACSA). The segment covering 102-114 (DSLSGQGQPSSSD) has biased composition (polar residues). Residues 183–242 (MRRYRTAFTREQIARLEKEFYRENYVSRPRRCELAAALNLPETTIKVWFQNRRMKDKRQR) constitute a DNA-binding region (homeobox).

The protein belongs to the even-skipped homeobox family.

Its subcellular location is the nucleus. In terms of biological role, may play a role in the specification of neuronal cell types. The chain is Homeobox even-skipped homolog protein 1 (EVX1) from Homo sapiens (Human).